A 104-amino-acid polypeptide reads, in one-letter code: Large ribosomal subunit protein uL24 (104 aa).

This sequence belongs to the universal ribosomal protein uL24 family. Part of the 50S ribosomal subunit.

Its function is as follows. One of two assembly initiator proteins, it binds directly to the 5'-end of the 23S rRNA, where it nucleates assembly of the 50S subunit. One of the proteins that surrounds the polypeptide exit tunnel on the outside of the subunit. In Pectobacterium atrosepticum (strain SCRI 1043 / ATCC BAA-672) (Erwinia carotovora subsp. atroseptica), this protein is Large ribosomal subunit protein uL24.